A 206-amino-acid chain; its full sequence is Dephospho-CoA kinase (206 aa).

In terms of domain architecture, DPCK spans 4-200; it reads IVALTGGIGS…AHYLQLASQF (197 aa). Residue 12–17 participates in ATP binding; sequence GSGKST.

This sequence belongs to the CoaE family.

Its subcellular location is the cytoplasm. The enzyme catalyses 3'-dephospho-CoA + ATP = ADP + CoA + H(+). Its pathway is cofactor biosynthesis; coenzyme A biosynthesis; CoA from (R)-pantothenate: step 5/5. Catalyzes the phosphorylation of the 3'-hydroxyl group of dephosphocoenzyme A to form coenzyme A. This Shigella flexneri protein is Dephospho-CoA kinase.